The following is a 327-amino-acid chain: Glutaminase 1 (327 aa).

Positions 74, 126, 170, 177, 201, 253, and 271 each coordinate substrate.

It belongs to the glutaminase family. In terms of assembly, homotetramer.

It catalyses the reaction L-glutamine + H2O = L-glutamate + NH4(+). The protein is Glutaminase 1 (glsA1) of Bacillus subtilis (strain 168).